The following is a 330-amino-acid chain: Lipoyl synthase (330 aa).

[4Fe-4S] cluster contacts are provided by cysteine 55, cysteine 60, cysteine 66, cysteine 81, cysteine 85, cysteine 88, and serine 292. Positions 67-281 (WEDREATFLI…AEEAREIGFV (215 aa)) constitute a Radical SAM core domain.

Belongs to the radical SAM superfamily. Lipoyl synthase family. [4Fe-4S] cluster is required as a cofactor.

It localises to the cytoplasm. It catalyses the reaction [[Fe-S] cluster scaffold protein carrying a second [4Fe-4S](2+) cluster] + N(6)-octanoyl-L-lysyl-[protein] + 2 oxidized [2Fe-2S]-[ferredoxin] + 2 S-adenosyl-L-methionine + 4 H(+) = [[Fe-S] cluster scaffold protein] + N(6)-[(R)-dihydrolipoyl]-L-lysyl-[protein] + 4 Fe(3+) + 2 hydrogen sulfide + 2 5'-deoxyadenosine + 2 L-methionine + 2 reduced [2Fe-2S]-[ferredoxin]. It functions in the pathway protein modification; protein lipoylation via endogenous pathway; protein N(6)-(lipoyl)lysine from octanoyl-[acyl-carrier-protein]: step 2/2. Catalyzes the radical-mediated insertion of two sulfur atoms into the C-6 and C-8 positions of the octanoyl moiety bound to the lipoyl domains of lipoate-dependent enzymes, thereby converting the octanoylated domains into lipoylated derivatives. In Cutibacterium acnes (strain DSM 16379 / KPA171202) (Propionibacterium acnes), this protein is Lipoyl synthase.